Consider the following 293-residue polypeptide: PHO85 cyclin PHO80 (293 aa).

2 positions are modified to phosphoserine; by PHO85: Ser234 and Ser267. Polar residues predominate over residues 254-272 (ESGSQTTQLKGSSSPNSHS). The segment at 254–293 (ESGSQTTQLKGSSSPNSHSSQKRYSEAKDAHIYNKRSKPD) is disordered. Positions 276-293 (RYSEAKDAHIYNKRSKPD) are enriched in basic and acidic residues.

The protein belongs to the cyclin family. PHO80 subfamily. In terms of assembly, forms a cyclin-CDK complex with PHO85. PHO80-PHO85 forms a stable complex with its inhibitor PHO81 under both high- and low-phosphate conditions, but PHO81 only inhibits the kinase upon phosphate starvation. Interacts with transcription factor PHO4. Post-translationally, phosphorylation of Ser-267 by PHO85 is required to form an active cyclin-kinase complex and for function.

Its subcellular location is the cytoplasm. It is found in the nucleus. Its activity is regulated as follows. Inhibited by the CDK inhibitor (CKI) PHO81 in response to phosphate starvation. In terms of biological role, cyclin partner of the cyclin-dependent kinase (CDK) PHO85. Negatively regulates the expression of phosphate-starvation-responsive genes under phosphate-rich conditions. The PHO80-PHO85 cyclin-CDK holoenzyme phosphorylates and inactivates the transcription factor PHO4, by preventing its association with the transcription factor PHO2 and the nuclear import receptor PSE1, and by promoting association with the nuclear export receptor MSN5, excluding PHO4 from the nucleus. PHO80-PHO85 phosphorylates and inactivates protein kinase RIM15 by retaining it in the cytoplasm, antagonizing RIM15-induced entry into stationary phase. PHO80-PHO85 also phosphorylates and inactivates the calcineurin-responsive transcription factor CRZ1, linking PHO85 to calcium signaling. This is PHO85 cyclin PHO80 (PHO80) from Saccharomyces cerevisiae (strain ATCC 204508 / S288c) (Baker's yeast).